A 629-amino-acid polypeptide reads, in one-letter code: tRNA uridine 5-carboxymethylaminomethyl modification enzyme MnmG (629 aa).

Residues 13-18, valine 125, and serine 180 each bind FAD; that span reads GGGHAG. 273–287 lines the NAD(+) pocket; the sequence is GPRYCPSIEDKVMRF. Glutamine 370 serves as a coordination point for FAD.

Belongs to the MnmG family. In terms of assembly, homodimer. Heterotetramer of two MnmE and two MnmG subunits. FAD is required as a cofactor.

The protein resides in the cytoplasm. Its function is as follows. NAD-binding protein involved in the addition of a carboxymethylaminomethyl (cmnm) group at the wobble position (U34) of certain tRNAs, forming tRNA-cmnm(5)s(2)U34. This chain is tRNA uridine 5-carboxymethylaminomethyl modification enzyme MnmG, found in Salmonella choleraesuis (strain SC-B67).